The primary structure comprises 97 residues: Lipolysis-activating peptide 1-alpha chain (97 aa).

An N-terminal signal peptide occupies residues 1-21 (MNITLFCSVFILISLAGLSVS). The region spanning 25–88 (PGNYPMSLYG…FWAAHKNHCK (64 aa)) is the LCN-type CS-alpha/beta domain. Disulfide bonds link C39-C62, C48-C67, and C52-C69.

The protein belongs to the long (3 C-C) scorpion toxin superfamily. In terms of assembly, monomer (edited version) and heterodimer (non-edited version) of this alpha chain and a beta chain (AC D9U2A2). As to expression, expressed by the venom gland.

The protein resides in the secreted. Functionally, the heterodimer non-edited LVP1 induces lipolysis in rat adipocytes. Induction of lipolysis by LVP1 appears to be mediated through the beta-2 adrenergic receptor pathway (ADRB2). In terms of biological role, the edited BmKBTx-like, similar to beta-toxins, may modulate voltage-gated sodium channels (Nav) and may block voltage-gated potassium channels (Kv). This chain is Lipolysis-activating peptide 1-alpha chain, found in Lychas mucronatus (Chinese swimming scorpion).